We begin with the raw amino-acid sequence, 343 residues long: Twinfilin (343 aa).

ADF-H domains follow at residues 11-135 (EQLA…EGYR) and 184-312 (EATV…DELH). The interval 319-343 (RPAFAKPKGPPNRGAKRLTRPTAED) is disordered.

Belongs to the actin-binding proteins ADF family. Twinfilin subfamily. As to quaternary structure, interacts with G-actin; ADP-actin form.

The protein localises to the cytoplasm. It is found in the cytoskeleton. The protein resides in the cell cortex. In terms of biological role, actin-binding protein involved in motile and morphological processes. Inhibits actin polymerization, likely by sequestering G-actin. This chain is Twinfilin (twf), found in Drosophila melanogaster (Fruit fly).